A 159-amino-acid polypeptide reads, in one-letter code: ATP synthase subunit b (159 aa).

A helical transmembrane segment spans residues asparagine 2–valine 22.

This sequence belongs to the ATPase B chain family. F-type ATPases have 2 components, F(1) - the catalytic core - and F(0) - the membrane proton channel. F(1) has five subunits: alpha(3), beta(3), gamma(1), delta(1), epsilon(1). F(0) has three main subunits: a(1), b(2) and c(10-14). The alpha and beta chains form an alternating ring which encloses part of the gamma chain. F(1) is attached to F(0) by a central stalk formed by the gamma and epsilon chains, while a peripheral stalk is formed by the delta and b chains.

It localises to the cell membrane. F(1)F(0) ATP synthase produces ATP from ADP in the presence of a proton or sodium gradient. F-type ATPases consist of two structural domains, F(1) containing the extramembraneous catalytic core and F(0) containing the membrane proton channel, linked together by a central stalk and a peripheral stalk. During catalysis, ATP synthesis in the catalytic domain of F(1) is coupled via a rotary mechanism of the central stalk subunits to proton translocation. Functionally, component of the F(0) channel, it forms part of the peripheral stalk, linking F(1) to F(0). In Clostridium botulinum (strain ATCC 19397 / Type A), this protein is ATP synthase subunit b.